A 56-amino-acid polypeptide reads, in one-letter code: Small ribosomal subunit protein uS14 (56 aa).

Zn(2+) is bound by residues cysteine 21, cysteine 24, cysteine 39, and cysteine 42.

The protein belongs to the universal ribosomal protein uS14 family. As to quaternary structure, component of the 40S small ribosomal subunit. Zn(2+) serves as cofactor.

Its subcellular location is the cytoplasm. The protein localises to the cytosol. It is found in the rough endoplasmic reticulum. In Bombyx mori (Silk moth), this protein is Small ribosomal subunit protein uS14 (RpS29).